A 247-amino-acid polypeptide reads, in one-letter code: Particulate methane monooxygenase beta subunit (247 aa).

6 consecutive transmembrane segments (helical) span residues 23–43 (WMAL…HAML), 59–79 (LWVT…QSYL), 86–106 (PWGA…NRYF), 111–131 (WTYF…AIIL), 145–165 (AIVG…PIIA), and 215–235 (VSAF…HFIG).

In terms of assembly, m.capsulatus has two forms of methane monooxygenase, a soluble (sMMO) and a membrane-bound (particulate) type (pMMO). The particulate type is a nonamer composed of three alpha:beta:gamma heterotrimeric protomers assembled into a cylindrical structure; the beta and gamma subunits comprise the bulk of the membrane-spanning regions and the soluble regions are derived primarily from alpha subunits which form two antiparallel beta-barrel-like structures each. This assembly, also called pMMO hydroxylase (pMMO-H), is proposed to associate with methanol dehydrogenase (MDH), also designated as pMMO-R, to form the pMMO-C complex which seems to have greater methane monooxygenase activity.

The protein localises to the membrane. It catalyses the reaction methane + a quinol + O2 = methanol + a quinone + H2O. Functionally, non-catalytic subunit of the methane monooxygenase that is responsible for the initial oxygenation of methane to methanol in methanotrophs. At least in vitro, specific quinols can replace NADH as reductants. The polypeptide is Particulate methane monooxygenase beta subunit (pmoA1) (Methylococcus capsulatus (strain ATCC 33009 / NCIMB 11132 / Bath)).